Reading from the N-terminus, the 211-residue chain is Pyridoxine/pyridoxamine 5'-phosphate oxidase (211 aa).

Residues 7-10 (RREY) and lysine 65 contribute to the substrate site. FMN contacts are provided by residues 60–65 (RIVLLK), 75–76 (YT), arginine 81, lysine 82, and glutamine 104. 3 residues coordinate substrate: tyrosine 122, arginine 126, and serine 130. Residues 139-140 (QS) and tryptophan 184 contribute to the FMN site. 190–192 (RLH) is a binding site for substrate. An FMN-binding site is contributed by arginine 194.

The protein belongs to the pyridoxamine 5'-phosphate oxidase family. In terms of assembly, homodimer. Requires FMN as cofactor.

It catalyses the reaction pyridoxamine 5'-phosphate + O2 + H2O = pyridoxal 5'-phosphate + H2O2 + NH4(+). The enzyme catalyses pyridoxine 5'-phosphate + O2 = pyridoxal 5'-phosphate + H2O2. It participates in cofactor metabolism; pyridoxal 5'-phosphate salvage; pyridoxal 5'-phosphate from pyridoxamine 5'-phosphate: step 1/1. Its pathway is cofactor metabolism; pyridoxal 5'-phosphate salvage; pyridoxal 5'-phosphate from pyridoxine 5'-phosphate: step 1/1. Catalyzes the oxidation of either pyridoxine 5'-phosphate (PNP) or pyridoxamine 5'-phosphate (PMP) into pyridoxal 5'-phosphate (PLP). The sequence is that of Pyridoxine/pyridoxamine 5'-phosphate oxidase from Photobacterium profundum (strain SS9).